We begin with the raw amino-acid sequence, 274 residues long: 3-methyl-2-oxobutanoate hydroxymethyltransferase (274 aa).

Mg(2+)-binding residues include D54 and D93. 3-methyl-2-oxobutanoate is bound by residues 54 to 55 (DS), D93, and K121. E123 lines the Mg(2+) pocket. The active-site Proton acceptor is the E190.

It belongs to the PanB family. In terms of assembly, homodecamer; pentamer of dimers. Requires Mg(2+) as cofactor.

The protein resides in the cytoplasm. It carries out the reaction 3-methyl-2-oxobutanoate + (6R)-5,10-methylene-5,6,7,8-tetrahydrofolate + H2O = 2-dehydropantoate + (6S)-5,6,7,8-tetrahydrofolate. The protein operates within cofactor biosynthesis; (R)-pantothenate biosynthesis; (R)-pantoate from 3-methyl-2-oxobutanoate: step 1/2. Catalyzes the reversible reaction in which hydroxymethyl group from 5,10-methylenetetrahydrofolate is transferred onto alpha-ketoisovalerate to form ketopantoate. The polypeptide is 3-methyl-2-oxobutanoate hydroxymethyltransferase (Ralstonia nicotianae (strain ATCC BAA-1114 / GMI1000) (Ralstonia solanacearum)).